The primary structure comprises 229 residues: MKPRTPPDSPLLFDTAPLVPDFRLELKARKAGHWPVAGADEAGRGPLAGPVVAAAVILDPKRIPEGLNDSKQLSAQRREELFVQILATATVSIASSSSTRIDETDIRKASLDAMRRAICSLAIPASYVLTDGLDVPPGLDCPGQAVVKGDARSVSIAAASIVAKVTRDRMMARAHSVFPDYGFAAHVGYGTAQHRAGIERHGPCSLHRMSFRPLRKTENGPETDELLSE.

The RNase H type-2 domain maps to 34 to 223; sequence WPVAGADEAG…LRKTENGPET (190 aa). A divalent metal cation contacts are provided by Asp40, Glu41, and Asp131. The segment at 209-229 is disordered; that stretch reads MSFRPLRKTENGPETDELLSE.

It belongs to the RNase HII family. It depends on Mn(2+) as a cofactor. The cofactor is Mg(2+).

The protein localises to the cytoplasm. It carries out the reaction Endonucleolytic cleavage to 5'-phosphomonoester.. Its function is as follows. Endonuclease that specifically degrades the RNA of RNA-DNA hybrids. This Rhizobium johnstonii (strain DSM 114642 / LMG 32736 / 3841) (Rhizobium leguminosarum bv. viciae) protein is Ribonuclease HII.